Consider the following 230-residue polypeptide: Cutinase (230 aa).

The signal sequence occupies residues 1–16; it reads MKFFALTTFLAATASA. A disulfide bridge links Cys-47 with Cys-125. Ser-136 serves as the catalytic Nucleophile. A disulfide bridge connects residues Cys-187 and Cys-194. Asp-191 is an active-site residue. His-204 acts as the Proton donor/acceptor in catalysis.

This sequence belongs to the cutinase family. Post-translationally, the 2 disulfide bonds play a critical role in holding the catalytic residues in juxta-position; reduction of the disulfide bridges results in the complete inactivation of the enzyme.

The protein localises to the secreted. It carries out the reaction cutin + H2O = cutin monomers.. Catalyzes the hydrolysis of complex carboxylic polyesters found in the cell wall of plants. Degrades cutin, a macromolecule that forms the structure of the plant cuticle. Allows pathogenic fungi to penetrate through the cuticular barrier into the host plant during the initial stage of fungal infection. This Fusarium solani subsp. cucurbitae (Neocosmosporum cucurbitae) protein is Cutinase (CUTA).